A 147-amino-acid chain; its full sequence is D-aminoacyl-tRNA deacylase (147 aa).

Positions 136 to 137 (GP) match the Gly-cisPro motif, important for rejection of L-amino acids motif.

Belongs to the DTD family. Homodimer.

The protein localises to the cytoplasm. The enzyme catalyses glycyl-tRNA(Ala) + H2O = tRNA(Ala) + glycine + H(+). It carries out the reaction a D-aminoacyl-tRNA + H2O = a tRNA + a D-alpha-amino acid + H(+). Functionally, an aminoacyl-tRNA editing enzyme that deacylates mischarged D-aminoacyl-tRNAs. Also deacylates mischarged glycyl-tRNA(Ala), protecting cells against glycine mischarging by AlaRS. Acts via tRNA-based rather than protein-based catalysis; rejects L-amino acids rather than detecting D-amino acids in the active site. By recycling D-aminoacyl-tRNA to D-amino acids and free tRNA molecules, this enzyme counteracts the toxicity associated with the formation of D-aminoacyl-tRNA entities in vivo and helps enforce protein L-homochirality. In Streptococcus pyogenes serotype M6 (strain ATCC BAA-946 / MGAS10394), this protein is D-aminoacyl-tRNA deacylase.